The primary structure comprises 131 residues: Small ribosomal subunit protein eS8 (131 aa).

A disordered region spans residues 15–36; that stretch reads PSGGKKGRVRKTKKKALGGGPP. Positions 17–30 are enriched in basic residues; the sequence is GGKKGRVRKTKKKA.

This sequence belongs to the eukaryotic ribosomal protein eS8 family. As to quaternary structure, part of the 30S ribosomal subunit.

The sequence is that of Small ribosomal subunit protein eS8 from Pyrobaculum calidifontis (strain DSM 21063 / JCM 11548 / VA1).